Here is a 307-residue protein sequence, read N- to C-terminus: Leucine-rich repeat-containing protein 59 (307 aa).

Residues 1–247 are Cytoplasmic-facing; sequence MARANGRSQN…LAQRQSRLRK (247 aa). LRR repeat units follow at residues 10–31, 40–61, 63–84, 86–107, and 109–131; these read NLRDKLDGNELDLSLSDLSEVP, KATALDLSCNKLTTLPDDFCNL, HIVRLDLSKNQIVQLPSEFGRL, NLQHLDLLQNHLMSLPVSFAQL, and SLKWLDLKDNPLKPDLAKVAGDC. Positions 156 to 222 form a coiled coil; the sequence is EIELQRKLQL…LNSNKKAEEE (67 aa). The segment at 170–238 is disordered; that stretch reads KKKLEAKQRV…RMATPKEKKL (69 aa). 2 stretches are compositionally biased toward basic and acidic residues: residues 174 to 187 and 194 to 238; these read EAKQRVKEEQEREM and QQKE…EKKL. The helical transmembrane segment at 248–268 threads the bilayer; the sequence is IACILLFGLLVVLLVVVACRF. Residues 269–307 lie on the Lumenal side of the membrane; sequence TDLKAINMCTSVNAIYKETLSALHSNPVLERFLQDPSSQ.

As to quaternary structure, interacts with SGO1.

It is found in the microsome membrane. The protein localises to the endoplasmic reticulum membrane. The protein resides in the nucleus envelope. Required for nuclear import of FGF1. The protein is Leucine-rich repeat-containing protein 59 (lrrc59) of Xenopus laevis (African clawed frog).